Reading from the N-terminus, the 337-residue chain is MSQPPAAHVPVLYTQVLDGLQVTENGTYLDGTFGRGGHARGVLEHLGPGGRLLVMDKDPDAIAVAEQTFGGDARVSIHRGSFAGLGQVVAAATVDGILLDLGVSSPQLDVAGRGFSFGKDGPLDMRMDPDSGQSAAQWLAQATDREIADVLWAYGEERQSRRIARAIVARRAEQPLLRTAQLADLIASVMPRGDSKTHPATRSFQAIRIYINRELDDLETGLDAALAALKPGGRLAVISFHSLEDRIVKQFMARYAKAPPSNRRLPEAQPFVPTLQLVSGAIKADDTELNVNPRARSAVLRVAEKLELGIGDSGLERRSGRIPNPRSPIPASQGDAR.

S-adenosyl-L-methionine is bound by residues 36–38 (GGH), aspartate 56, phenylalanine 82, aspartate 100, and glutamine 107. The disordered stretch occupies residues 314–337 (GLERRSGRIPNPRSPIPASQGDAR).

This sequence belongs to the methyltransferase superfamily. RsmH family.

The protein resides in the cytoplasm. The catalysed reaction is cytidine(1402) in 16S rRNA + S-adenosyl-L-methionine = N(4)-methylcytidine(1402) in 16S rRNA + S-adenosyl-L-homocysteine + H(+). In terms of biological role, specifically methylates the N4 position of cytidine in position 1402 (C1402) of 16S rRNA. In Xanthomonas oryzae pv. oryzae (strain PXO99A), this protein is Ribosomal RNA small subunit methyltransferase H.